The following is an 813-amino-acid chain: Kinesin-like protein KIN-8B (813 aa).

Residues 14–345 (TLTVAVKCRP…LKYADRAKEI (332 aa)) form the Kinesin motor domain. Position 104–111 (104–111 (GSTGSGKT)) interacts with ATP. Residues 349–391 (IQKNIGTIDTHMSDYQRMIDNLQSEVSQLKTQLAEKESQLSIK) adopt a coiled-coil conformation. Disordered regions lie at residues 664-694 (GSRP…PRMA) and 756-813 (AVST…RQHQ). Composition is skewed to polar residues over residues 682–694 (YPQT…PRMA), 761–791 (GARN…NSHT), and 804–813 (KGNNTQRQHQ).

Belongs to the TRAFAC class myosin-kinesin ATPase superfamily. Kinesin family. KIN-8 subfamily.

The protein is Kinesin-like protein KIN-8B of Arabidopsis thaliana (Mouse-ear cress).